A 249-amino-acid polypeptide reads, in one-letter code: Type I iodothyronine deiodinase (249 aa).

Topologically, residues 1–12 are extracellular; that stretch reads MELPLPGLWLKR. The helical; Signal-anchor for type III membrane protein transmembrane segment at 13 to 33 threads the bilayer; sequence LWVLFQVALHVAMGKVLMTLF. The Cytoplasmic portion of the chain corresponds to 34-249; sequence PGRVKQDILA…VRAVLEKLHS (216 aa). Selenocysteine 126 is an active-site residue. Position 126 (selenocysteine 126) is a non-standard amino acid, selenocysteine.

It belongs to the iodothyronine deiodinase family. As to quaternary structure, predominantly monomer. Can form homodimers but homodimerization is not essential for enzyme activity.

The protein localises to the cell membrane. Its subcellular location is the endoplasmic reticulum membrane. The protein resides in the basolateral cell membrane. The enzyme catalyses 3,3',5-triiodo-L-thyronine + iodide + A + H(+) = L-thyroxine + AH2. The catalysed reaction is 3,3',5'-triiodo-L-thyronine + iodide + A + H(+) = L-thyroxine + AH2. It carries out the reaction 3,3'-diiodo-L-thyronine + iodide + A + H(+) = 3,3',5'-triiodo-L-thyronine + AH2. It catalyses the reaction 3,3'-diiodo-L-thyronine + iodide + A + H(+) = 3,3',5-triiodo-L-thyronine + AH2. The enzyme catalyses 3'-iodo-L-thyronine + iodide + A + H(+) = 3',5'-diiodo-L-thyronine + AH2. The catalysed reaction is 3-iodo-L-thyronine + iodide + A + H(+) = 3,5-diiodo-L-thyronine + AH2. It carries out the reaction 3-iodo-L-thyronine + iodide + A + H(+) = 3,3'-diiodo-L-thyronine + AH2. It catalyses the reaction 3,3'-diiodothyronamine + iodide + A + H(+) = 3,3',5'-triiodothyronamine + AH2. The enzyme catalyses 3'-iodothyronamine + iodide + A + H(+) = 3',5'-diiodothyronamine + AH2. The catalysed reaction is 3-iodothyronamine + iodide + A + H(+) = 3,3'-diiodothyronamine + AH2. It carries out the reaction 3,3'-diiodothyronamine + iodide + A + H(+) = 3,3',5-triiodothyronamine + AH2. It catalyses the reaction 3-iodothyronamine + iodide + A + H(+) = 3,5-diiodothyronamine + AH2. The enzyme catalyses 3,3'-diiodo-L-thyronine sulfate + iodide + A + H(+) = 3,3',5'-triiodo-L-thyronine sulfate + AH2. The catalysed reaction is 3,3',5'-triiodo-L-thyronine sulfate + iodide + A + H(+) = L-thyroxine sulfate + AH2. It carries out the reaction 3,3'-diiodo-L-thyronine sulfate + iodide + A + H(+) = 3,3',5-triiodo-L-thyronine sulfate + AH2. In terms of biological role, plays a crucial role in the metabolism of thyroid hormones (TH) and has specific roles in TH activation and inactivation by deiodination. Catalyzes the deiodination of L-thyroxine (T4) to 3,5,3'-triiodothyronine (T3) and 3,3',5'-triiodothyronine (rT3) to 3,3'-diiodothyronine (3,3'-T2) via outer-ring deiodination (ORD). Catalyzes the deiodination of T4 to rT3, T3 to 3,3'-T2, 3,5-diiodothyronine (3,5-T2) to 3-monoiodothyronine (3-T1) and 3,3'-T2 to 3-T1 via inner-ring deiodination (IRD). Catalyzes the deiodination of 3',5'-diiodothyronine (3',5'-T2) to 3'-monoiodothyronine (3'-T1) via ORD. Catalyzes the phenolic ring deiodinations of 3,3',5'-triiodothyronamine, 3',5'-diiodothyronamine and 3,3'-diiodothyronamine as well as tyrosyl ring deiodinations of 3,5,3'-triiodothyronamine and 3,5-diiodothyronamine. Catalyzes the deiodination of L-thyroxine sulfate and 3,3',5-triiodo-L-thyronine sulfate via IRD and of 3,3',5'-triiodo-L-thyronine sulfate via ORD. This is Type I iodothyronine deiodinase (DIO1) from Sus scrofa (Pig).